Consider the following 202-residue polypeptide: Glycerol-3-phosphate acyltransferase 1 (202 aa).

The next 5 membrane-spanning stretches (helical) occupy residues 8–28, 85–105, 122–142, 146–166, and 173–190; these read AGMIDLFMILGAYLLGGMSTG, LSLTTLILCLIAGVAGHIWPL, ILVVDPMLASAAAGVFLFVLA, QFTLSGLAAILGAPILSLIMA, and AGLAVLAIFILLAHRKNI.

The protein belongs to the PlsY family. As to quaternary structure, probably interacts with PlsX.

The protein localises to the cell membrane. The catalysed reaction is an acyl phosphate + sn-glycerol 3-phosphate = a 1-acyl-sn-glycero-3-phosphate + phosphate. Its pathway is lipid metabolism; phospholipid metabolism. In terms of biological role, catalyzes the transfer of an acyl group from acyl-phosphate (acyl-PO(4)) to glycerol-3-phosphate (G3P) to form lysophosphatidic acid (LPA). This enzyme utilizes acyl-phosphate as fatty acyl donor, but not acyl-CoA or acyl-ACP. The protein is Glycerol-3-phosphate acyltransferase 1 of Desulfitobacterium hafniense (strain Y51).